We begin with the raw amino-acid sequence, 530 residues long: Bifunctional purine biosynthesis protein PurH (530 aa).

Residues methionine 1–valine 148 form the MGS-like domain.

It belongs to the PurH family.

It catalyses the reaction (6R)-10-formyltetrahydrofolate + 5-amino-1-(5-phospho-beta-D-ribosyl)imidazole-4-carboxamide = 5-formamido-1-(5-phospho-D-ribosyl)imidazole-4-carboxamide + (6S)-5,6,7,8-tetrahydrofolate. It carries out the reaction IMP + H2O = 5-formamido-1-(5-phospho-D-ribosyl)imidazole-4-carboxamide. It functions in the pathway purine metabolism; IMP biosynthesis via de novo pathway; 5-formamido-1-(5-phospho-D-ribosyl)imidazole-4-carboxamide from 5-amino-1-(5-phospho-D-ribosyl)imidazole-4-carboxamide (10-formyl THF route): step 1/1. It participates in purine metabolism; IMP biosynthesis via de novo pathway; IMP from 5-formamido-1-(5-phospho-D-ribosyl)imidazole-4-carboxamide: step 1/1. The chain is Bifunctional purine biosynthesis protein PurH from Vibrio atlanticus (strain LGP32) (Vibrio splendidus (strain Mel32)).